The primary structure comprises 202 residues: 7-methyl-GTP pyrophosphatase (202 aa).

The active-site Proton acceptor is the aspartate 70.

This sequence belongs to the Maf family. YceF subfamily. The cofactor is a divalent metal cation.

The protein resides in the cytoplasm. The enzyme catalyses N(7)-methyl-GTP + H2O = N(7)-methyl-GMP + diphosphate + H(+). In terms of biological role, nucleoside triphosphate pyrophosphatase that hydrolyzes 7-methyl-GTP (m(7)GTP). May have a dual role in cell division arrest and in preventing the incorporation of modified nucleotides into cellular nucleic acids. This chain is 7-methyl-GTP pyrophosphatase, found in Pseudoalteromonas translucida (strain TAC 125).